Consider the following 123-residue polypeptide: Large ribosomal subunit protein uL14 (123 aa).

This sequence belongs to the universal ribosomal protein uL14 family. As to quaternary structure, part of the 50S ribosomal subunit. Forms a cluster with proteins L3 and L19. In the 70S ribosome, L14 and L19 interact and together make contacts with the 16S rRNA in bridges B5 and B8.

In terms of biological role, binds to 23S rRNA. Forms part of two intersubunit bridges in the 70S ribosome. The protein is Large ribosomal subunit protein uL14 of Chromohalobacter salexigens (strain ATCC BAA-138 / DSM 3043 / CIP 106854 / NCIMB 13768 / 1H11).